The primary structure comprises 187 residues: ATP-dependent protease subunit HslV (187 aa).

T7 is a catalytic residue. Positions 162, 165, and 168 each coordinate Na(+).

The protein belongs to the peptidase T1B family. HslV subfamily. In terms of assembly, a double ring-shaped homohexamer of HslV is capped on each side by a ring-shaped HslU homohexamer. The assembly of the HslU/HslV complex is dependent on binding of ATP.

It is found in the cytoplasm. It catalyses the reaction ATP-dependent cleavage of peptide bonds with broad specificity.. With respect to regulation, allosterically activated by HslU binding. Protease subunit of a proteasome-like degradation complex believed to be a general protein degrading machinery. The protein is ATP-dependent protease subunit HslV of Methylococcus capsulatus (strain ATCC 33009 / NCIMB 11132 / Bath).